A 160-amino-acid chain; its full sequence is Ureidoglycolate lyase (160 aa).

This sequence belongs to the ureidoglycolate lyase family. In terms of assembly, homodimer. The cofactor is Ni(2+).

The enzyme catalyses (S)-ureidoglycolate = urea + glyoxylate. It participates in nitrogen metabolism; (S)-allantoin degradation. Catalyzes the catabolism of the allantoin degradation intermediate (S)-ureidoglycolate, generating urea and glyoxylate. Involved in the anaerobic utilization of allantoin as sole nitrogen source. Reinforces the induction of genes involved in the degradation of allantoin and glyoxylate by producing glyoxylate. This chain is Ureidoglycolate lyase, found in Escherichia coli (strain K12 / MC4100 / BW2952).